Consider the following 911-residue polypeptide: Disks large homolog 1 (911 aa).

The 61-residue stretch at 4 to 64 folds into the L27 domain; sequence RKQDTQRALH…FYEVTLLDNP (61 aa). Ser39 bears the Phosphoserine; by CaMK2 mark. The interval 70-105 is disordered; the sequence is SKQCEPVQPGNPWESGSLSSAAVTSESLPGGLSPPV. Positions 83-96 are enriched in polar residues; sequence ESGSLSSAAVTSES. A phosphoserine mark is found at Ser122, Ser138, and Ser158. Residues 162 to 212 are interaction with SH3 domains; the sequence is PTEAVPPSSPIVPVTPALPVPAESPVVLPSTPQANPPPVLVNTDSLETPTY. 2 consecutive PDZ domains span residues 224–310 and 318–404; these read EITL…VKRR and EIKL…AAKP. The segment at 224–545 is required for interaction with MARCHF2; sequence EITLERGNSG…QAVTIVAQYR (322 aa). Phosphoserine; by CaMK2 is present on Ser232. Phosphotyrosine is present on Tyr398. A compositionally biased stretch (polar residues) spans 419–441; sequence TNSSSQSVDNHVSPSSYLGQTPA. Residues 419-443 form a disordered region; the sequence is TNSSSQSVDNHVSPSSYLGQTPASP. In terms of domain architecture, PDZ 3 spans 465–545; that stretch reads KVVLHRGSTG…QAVTIVAQYR (81 aa). Phosphoserine occurs at positions 567, 572, 574, 578, 597, 618, 684, 687, and 841. Positions 580-650 constitute an SH3 domain; that stretch reads KRSLYVRALF…PSKRRVEKKE (71 aa). A disordered region spans residues 662-696; it reads KTRGDKGEIPDDMGSKGLKHVTSNASDSESSYHEY. The region spanning 721–896 is the Guanylate kinase-like domain; it reads TRPVIILGPM…IYNQVKQIIE (176 aa).

This sequence belongs to the MAGUK family. In terms of assembly, homotetramer. Interacts (via guanylate kinase-like domain) with DLGAP1, DLGAP2, DLGAP3, DLGAP4 and MAP1A. Interacts (via guanylate kinase-like domain) with KIF13B. May interact with HTR2A. Interacts (via PDZ domains) with GRIA1. Interacts (via PDZ domains) with GRIN2A. Interacts (via PDZ domains) with KCND2 and KCND3. Interacts (via PDZ domains) with KCNA1, KCNA2, KCNA3 and KCNA4. Interacts (via PDZ domains) with ADGRA3. Interacts with KCNF1. Interacts with CAMK2. Interacts with cytoskeleton-associated protein EPB41. Interacts with cytoskeleton-associated protein EZR. Found in a complex with KCNA5 and CAV3. Found in a complex with APC and CTNNB1. Interacts (via PDZ domains) with APC. Interacts with CDH1 through binding to PIK3R1. Forms multiprotein complexes with CASK, LIN7A, LIN7B, LIN7C, APBA1, and KCNJ12. Interacts with TOPK. Forms a tripartite complex composed of DLG1, MPP7 and LIN7 (LIN7A or LIN7C). May interact with TJAP1. Interacts with PTEN. Interacts with FRMPD4 (via C-terminus). Interacts with LRFN1 and LRFN2. Interacts with LRFN4 and SFPQ. Interacts (via PDZ domains) with ADGRA2 (via PDZ-binding motif). Interacts with ADAM10; this interaction recruits ADAM10 to the cell membrane during long-term depression in hippocampal neurons. Interacts with DGKI (via PDZ-binding motif). Interacts (via PDZ domains) with MARCHF2 (via PDZ domain); the interaction leads to DLG1 ubiqtuitination and degradation. Interacts (via N-terminus) with MPP3; this interaction connects CADM1 with DLG1 and links CADM1 with the regulatory subunit of phosphoinositide-3-kinase (PI3K) by forming a multiprotein complex and participates in cell spreading. In terms of processing, phosphorylated by MAPK12. Phosphorylation of Ser-39 modulates transport to the plasma membrane. Phosphorylation of Ser-232 regulates association with GRIN2A. Ubiquitinated; by MARCHF2 which results in its degradation. As to expression, widely expressed. Strongly expressed in epithelial cells, in the small intestine it is only detected in the vili. Expressed in brain, heart (at protein level), muscle, lung and liver. In the brain it was detected in olfactory bulbs, cerebral cortex, hippocampus, and spinal cord (at protein level).

It is found in the cell membrane. The protein resides in the basolateral cell membrane. It localises to the endoplasmic reticulum membrane. Its subcellular location is the postsynaptic density. The protein localises to the synapse. It is found in the sarcolemma. The protein resides in the cell junction. It localises to the cytoplasm. Its subcellular location is the apical cell membrane. Its function is as follows. Essential multidomain scaffolding protein required for normal development. Recruits channels, receptors and signaling molecules to discrete plasma membrane domains in polarized cells. Promotes epithelial cell layer barrier function via maintaining cell-cell adhesion. May play a role in adherens junction assembly, signal transduction, cell proliferation, synaptogenesis and lymphocyte activation. Regulates the excitability of cardiac myocytes by modulating the functional expression of Kv4 channels. Functional regulator of Kv1.5 channel. During long-term depression in hippocampal neurons, it recruits ADAM10 to the plasma membrane. The sequence is that of Disks large homolog 1 from Rattus norvegicus (Rat).